Reading from the N-terminus, the 93-residue chain is Protein YzgL (93 aa).

The protein is Protein YzgL (yzgL) of Escherichia coli (strain K12).